The sequence spans 49 residues: Protein 19.5 (49 aa).

The signal sequence occupies residues 1–23 (MFRLLLNLLRHRVTYRFLVVLCA).

This is Protein 19.5 from Escherichia phage T7 (Bacteriophage T7).